The sequence spans 372 residues: Cell division protein FtsZ 1 (372 aa).

GTP contacts are provided by residues 51–55, 138–140, E169, R173, and D216; these read GAGCN and GTG. The segment at 351–372 is disordered; it reads QEETPEPSEEEVPPVKIDIPEL. Over residues 353-362 the composition is skewed to acidic residues; that stretch reads ETPEPSEEEV.

This sequence belongs to the FtsZ family. In terms of assembly, homodimer. Polymerizes to form a dynamic ring structure in a strictly GTP-dependent manner. Interacts directly with several other division proteins.

It localises to the cytoplasm. Essential cell division protein that forms a contractile ring structure (Z ring) at the future cell division site. The regulation of the ring assembly controls the timing and the location of cell division. One of the functions of the FtsZ ring is to recruit other cell division proteins to the septum to produce a new cell wall between the dividing cells. Binds GTP and shows GTPase activity. The chain is Cell division protein FtsZ 1 from Pyrococcus abyssi (strain GE5 / Orsay).